The sequence spans 638 residues: Phosphomethylpyrimidine synthase (638 aa).

Residues Asn243, Met272, Tyr301, His337, 357 to 359 (SRG), 398 to 401 (DGLR), and Glu437 contribute to the substrate site. Position 441 (His441) interacts with Zn(2+). Tyr464 provides a ligand contact to substrate. His505 lines the Zn(2+) pocket. [4Fe-4S] cluster contacts are provided by Cys585, Cys588, and Cys593.

It belongs to the ThiC family. Homodimer. Requires [4Fe-4S] cluster as cofactor.

The catalysed reaction is 5-amino-1-(5-phospho-beta-D-ribosyl)imidazole + S-adenosyl-L-methionine = 4-amino-2-methyl-5-(phosphooxymethyl)pyrimidine + CO + 5'-deoxyadenosine + formate + L-methionine + 3 H(+). The protein operates within cofactor biosynthesis; thiamine diphosphate biosynthesis. Catalyzes the synthesis of the hydroxymethylpyrimidine phosphate (HMP-P) moiety of thiamine from aminoimidazole ribotide (AIR) in a radical S-adenosyl-L-methionine (SAM)-dependent reaction. This is Phosphomethylpyrimidine synthase from Azoarcus sp. (strain BH72).